The following is a 665-amino-acid chain: DNA ligase (665 aa).

Residues 35 to 39 (DAIYD), 88 to 89 (SL), and Glu-117 each bind NAD(+). Catalysis depends on Lys-119, which acts as the N6-AMP-lysine intermediate. Residues Arg-140, Glu-174, Lys-290, and Lys-314 each contribute to the NAD(+) site. Positions 406, 409, 424, and 429 each coordinate Zn(2+). Residues 588–665 (KKTERFAQLS…EEAFNELLVS (78 aa)) enclose the BRCT domain.

Belongs to the NAD-dependent DNA ligase family. LigA subfamily. The cofactor is Mg(2+). Mn(2+) serves as cofactor.

The catalysed reaction is NAD(+) + (deoxyribonucleotide)n-3'-hydroxyl + 5'-phospho-(deoxyribonucleotide)m = (deoxyribonucleotide)n+m + AMP + beta-nicotinamide D-nucleotide.. DNA ligase that catalyzes the formation of phosphodiester linkages between 5'-phosphoryl and 3'-hydroxyl groups in double-stranded DNA using NAD as a coenzyme and as the energy source for the reaction. It is essential for DNA replication and repair of damaged DNA. The polypeptide is DNA ligase (Metamycoplasma arthritidis (strain 158L3-1) (Mycoplasma arthritidis)).